The chain runs to 151 residues: Ribosome maturation factor RimP (151 aa).

The protein belongs to the RimP family.

It localises to the cytoplasm. Required for maturation of 30S ribosomal subunits. This Shewanella baltica (strain OS223) protein is Ribosome maturation factor RimP.